The chain runs to 198 residues: Peroxiredoxin-2 (198 aa).

Ala2 bears the N-acetylalanine mark. The Thioredoxin domain occupies 6–164 (AHIGKPAPDF…ALRLVQAFQY (159 aa)). The Cysteine sulfenic acid (-SOH) intermediate role is filled by Cys51. A Phosphoserine modification is found at Ser112. At Thr182 the chain carries Phosphothreonine. Lys196 is modified (N6-acetyllysine).

It belongs to the peroxiredoxin family. AhpC/Prx1 subfamily. In terms of assembly, homodimer; disulfide-linked, upon oxidation. 5 homodimers assemble to form a ring-like decamer. Interacts with TIPIN. Post-translationally, the enzyme can be inactivated by further oxidation of the cysteine sulfenic acid (C(P)-SOH) to sulphinic acid (C(P)-SO2H) instead of its condensation to a disulfide bond. It can be reactivated by forming a transient disulfide bond with sulfiredoxin SRXN1, which reduces the cysteine sulfinic acid in an ATP- and Mg-dependent manner. In terms of processing, acetylation increases resistance to transition to high molecular-mass complexes. Deacetylated by HDAC6 which decreases reducing activity.

It is found in the cytoplasm. It carries out the reaction a hydroperoxide + [thioredoxin]-dithiol = an alcohol + [thioredoxin]-disulfide + H2O. Functionally, thiol-specific peroxidase that catalyzes the reduction of hydrogen peroxide and organic hydroperoxides to water and alcohols, respectively. Plays a role in cell protection against oxidative stress by detoxifying peroxides and as sensor of hydrogen peroxide-mediated signaling events. Might participate in the signaling cascades of growth factors and tumor necrosis factor-alpha by regulating the intracellular concentrations of H(2)O(2). The sequence is that of Peroxiredoxin-2 (PRDX2) from Cricetulus griseus (Chinese hamster).